The sequence spans 225 residues: PKHD-type hydroxylase YbiX (225 aa).

A Fe2OG dioxygenase domain is found at Thr78–Ser177. Fe cation-binding residues include His96, Asp98, and His158. Arg168 is a binding site for 2-oxoglutarate.

Fe(2+) is required as a cofactor. L-ascorbate serves as cofactor.

The polypeptide is PKHD-type hydroxylase YbiX (Escherichia coli O81 (strain ED1a)).